A 158-amino-acid polypeptide reads, in one-letter code: uncharacterized protein (158 aa).

3 helical membrane passes run 45-65, 76-96, and 106-126; these read GIFF…PAVI, LAIG…IFAW, and FILV…VFAL.

To U.parvum UU007, UU041 and UU042.

It localises to the cell membrane. This is an uncharacterized protein from Ureaplasma parvum serovar 3 (strain ATCC 700970).